A 165-amino-acid chain; its full sequence is Putative 4-hydroxy-4-methyl-2-oxoglutarate aldolase (165 aa).

Residues 80-83 and Arg102 contribute to the substrate site; that span reads GGNL. Asp103 provides a ligand contact to a divalent metal cation.

This sequence belongs to the class II aldolase/RraA-like family. Homotrimer. The cofactor is a divalent metal cation.

The catalysed reaction is 4-hydroxy-4-methyl-2-oxoglutarate = 2 pyruvate. The enzyme catalyses oxaloacetate + H(+) = pyruvate + CO2. Functionally, catalyzes the aldol cleavage of 4-hydroxy-4-methyl-2-oxoglutarate (HMG) into 2 molecules of pyruvate. Also contains a secondary oxaloacetate (OAA) decarboxylase activity due to the common pyruvate enolate transition state formed following C-C bond cleavage in the retro-aldol and decarboxylation reactions. The polypeptide is Putative 4-hydroxy-4-methyl-2-oxoglutarate aldolase (Burkholderia mallei (strain NCTC 10247)).